Here is a 562-residue protein sequence, read N- to C-terminus: Cell division protein FtsZ (562 aa).

GTP-binding positions include 23-27 (GAGGN), 110-112 (GTG), E141, R145, and D189. Residues 404–413 (PAAARPAQQP) are compositionally biased toward low complexity. 2 disordered regions span residues 404-428 (PAAARPAQQPMAETFRPDPQLRLDP) and 462-562 (ETAQ…RQAN). Residues 418–428 (FRPDPQLRLDP) show a composition bias toward basic and acidic residues. Low complexity-rich tracts occupy residues 464-486 (AQAAPQPQRQPEIQRQQAPQPQR) and 500-510 (GLLRRPAAAQP).

The protein belongs to the FtsZ family. Homodimer. Polymerizes to form a dynamic ring structure in a strictly GTP-dependent manner. Interacts directly with several other division proteins. Interacts with FtsZ-like protein (also called FtsZm).

The protein localises to the cytoplasm. Essential cell division protein that forms a contractile ring structure (Z ring) at the future cell division site. The regulation of the ring assembly controls the timing and the location of cell division. One of the functions of the FtsZ ring is to recruit other cell division proteins to the septum to produce a new cell wall between the dividing cells. Binds GTP and shows GTPase activity. Mild overexpression impairs cell division, leading to very elongated cells. Isolated protein forms filaments and bundles in the presence of GTP. In Magnetospirillum gryphiswaldense (strain DSM 6361 / JCM 21280 / NBRC 15271 / MSR-1), this protein is Cell division protein FtsZ.